The sequence spans 180 residues: Trichosurin (180 aa).

The N-terminal stretch at 1–15 (MKLLLLSMGLALVCG) is a signal peptide. N67 and N148 each carry an N-linked (GlcNAc...) asparagine glycan. A disulfide bridge connects residues C87 and C180.

It belongs to the calycin superfamily. Lipocalin family. Homodimer. As to expression, milk.

It is found in the secreted. The polypeptide is Trichosurin (Trichosurus vulpecula (Brush-tailed possum)).